Here is a 316-residue protein sequence, read N- to C-terminus: Pantothenate kinase (316 aa).

95–102 (GSVAVGKS) serves as a coordination point for ATP.

The protein belongs to the prokaryotic pantothenate kinase family.

Its subcellular location is the cytoplasm. It carries out the reaction (R)-pantothenate + ATP = (R)-4'-phosphopantothenate + ADP + H(+). It participates in cofactor biosynthesis; coenzyme A biosynthesis; CoA from (R)-pantothenate: step 1/5. This is Pantothenate kinase from Erwinia tasmaniensis (strain DSM 17950 / CFBP 7177 / CIP 109463 / NCPPB 4357 / Et1/99).